The sequence spans 330 residues: MAALPVLAVTSGEPAGVGPELCARLLARDWPARLVVLGDADLIAARAAAVGSPIAVRHYSRGQAQAAGVLEVLHIPLAEPSDAGRLAVGNARYVLALLDRALAGCVGGEFAGMVTAPVHKGVICESGIAFSGHTEYLAEHTATPLVVMMLVGGGMRVALATTHLPLAAVSAAITRPVLEQTLRILHADLVQRFGIAAPRILVAGLNPHAGEGGHMGREEIEVITPVLDRLRAEGLQLVGPLPADTLFAPHTLAHGDAVLAMYHDQGLPVLKHASFGGGVNVTLGLPVIRTSVDHGTALDLAGSGRADPGSLYAAVELAVSMAEARARQPR.

Substrate contacts are provided by histidine 133 and threonine 134. The a divalent metal cation site is built by histidine 163, histidine 208, and histidine 263. Lysine 271, asparagine 280, and arginine 289 together coordinate substrate.

Belongs to the PdxA family. Homodimer. Zn(2+) serves as cofactor. Mg(2+) is required as a cofactor. It depends on Co(2+) as a cofactor.

It is found in the cytoplasm. It catalyses the reaction 4-(phosphooxy)-L-threonine + NAD(+) = 3-amino-2-oxopropyl phosphate + CO2 + NADH. It functions in the pathway cofactor biosynthesis; pyridoxine 5'-phosphate biosynthesis; pyridoxine 5'-phosphate from D-erythrose 4-phosphate: step 4/5. Catalyzes the NAD(P)-dependent oxidation of 4-(phosphooxy)-L-threonine (HTP) into 2-amino-3-oxo-4-(phosphooxy)butyric acid which spontaneously decarboxylates to form 3-amino-2-oxopropyl phosphate (AHAP). This Azoarcus sp. (strain BH72) protein is 4-hydroxythreonine-4-phosphate dehydrogenase.